We begin with the raw amino-acid sequence, 978 residues long: Alanine--tRNA ligase, chloroplastic/mitochondrial (978 aa).

Positions 655, 659, 758, and 762 each coordinate Zn(2+). Lys773 is covalently cross-linked (Glycyl lysine isopeptide (Lys-Gly) (interchain with G-Cter in ubiquitin)).

Belongs to the class-II aminoacyl-tRNA synthetase family. Monomer. The cofactor is Zn(2+).

It is found in the plastid. Its subcellular location is the chloroplast. It localises to the mitochondrion. The enzyme catalyses tRNA(Ala) + L-alanine + ATP = L-alanyl-tRNA(Ala) + AMP + diphosphate. Catalyzes the attachment of alanine to tRNA(Ala) in a two-step reaction: alanine is first activated by ATP to form Ala-AMP and then transferred to the acceptor end of tRNA(Ala). Also edits incorrectly charged tRNA(Ala) via its editing domain. The protein is Alanine--tRNA ligase, chloroplastic/mitochondrial (EMB86) of Arabidopsis thaliana (Mouse-ear cress).